A 321-amino-acid polypeptide reads, in one-letter code: uncharacterized protein (321 aa).

The segment at Thr157–His220 is disordered. Residues Pro161 to Glu214 are compositionally biased toward acidic residues. The stretch at Asp167–Gly212 forms a coiled coil.

This is an uncharacterized protein from Dictyostelium discoideum (Social amoeba).